An 89-amino-acid chain; its full sequence is Small ribosomal subunit protein uS15 (89 aa).

The protein belongs to the universal ribosomal protein uS15 family. As to quaternary structure, part of the 30S ribosomal subunit. Forms a bridge to the 50S subunit in the 70S ribosome, contacting the 23S rRNA.

Its function is as follows. One of the primary rRNA binding proteins, it binds directly to 16S rRNA where it helps nucleate assembly of the platform of the 30S subunit by binding and bridging several RNA helices of the 16S rRNA. Forms an intersubunit bridge (bridge B4) with the 23S rRNA of the 50S subunit in the ribosome. In Yersinia enterocolitica serotype O:8 / biotype 1B (strain NCTC 13174 / 8081), this protein is Small ribosomal subunit protein uS15.